A 438-amino-acid polypeptide reads, in one-letter code: Methylenetetrahydrofolate--tRNA-(uracil-5-)-methyltransferase TrmFO 2 (438 aa).

Residue 9-14 participates in FAD binding; sequence GAGLAG.

The protein belongs to the MnmG family. TrmFO subfamily. Requires FAD as cofactor.

It is found in the cytoplasm. It catalyses the reaction uridine(54) in tRNA + (6R)-5,10-methylene-5,6,7,8-tetrahydrofolate + NADH + H(+) = 5-methyluridine(54) in tRNA + (6S)-5,6,7,8-tetrahydrofolate + NAD(+). The enzyme catalyses uridine(54) in tRNA + (6R)-5,10-methylene-5,6,7,8-tetrahydrofolate + NADPH + H(+) = 5-methyluridine(54) in tRNA + (6S)-5,6,7,8-tetrahydrofolate + NADP(+). Functionally, catalyzes the folate-dependent formation of 5-methyl-uridine at position 54 (M-5-U54) in all tRNAs. This Mycoplasma mycoides subsp. mycoides SC (strain CCUG 32753 / NCTC 10114 / PG1) protein is Methylenetetrahydrofolate--tRNA-(uracil-5-)-methyltransferase TrmFO 2.